A 1149-amino-acid polypeptide reads, in one-letter code: Beta-alanine-activating enzyme (1149 aa).

ATP is bound by residues 178 to 186 (TSGTTGLPK), aspartate 408, arginine 422, and lysine 543. A Carrier domain is found at 570 to 646 (ASVRLKLQNL…DLLSHIMTET (77 aa)). Serine 605 bears the O-(pantetheine 4'-phosphoryl)serine mark. Residues 653-683 (PSKKRTADYSDSEASGKRQHKEMTTSSDTES) form a disordered region.

The protein belongs to the ATP-dependent AMP-binding enzyme family.

Covalently binds beta-alanine in an ATP-dependent manner to form a thioester bond with its phosphopantetheine group and transfers it to an, as yet, unknown acceptor. May be required for a post-translational protein modification or for post-transcriptional modification of an RNA. The sequence is that of Beta-alanine-activating enzyme (aasdh) from Danio rerio (Zebrafish).